The primary structure comprises 151 residues: Ribosome maturation factor RimP (151 aa).

This sequence belongs to the RimP family.

The protein resides in the cytoplasm. In terms of biological role, required for maturation of 30S ribosomal subunits. The polypeptide is Ribosome maturation factor RimP (Vibrio campbellii (strain ATCC BAA-1116)).